The following is a 234-amino-acid chain: 2-C-methyl-D-erythritol 4-phosphate cytidylyltransferase (234 aa).

This sequence belongs to the IspD/TarI cytidylyltransferase family. IspD subfamily.

It carries out the reaction 2-C-methyl-D-erythritol 4-phosphate + CTP + H(+) = 4-CDP-2-C-methyl-D-erythritol + diphosphate. It functions in the pathway isoprenoid biosynthesis; isopentenyl diphosphate biosynthesis via DXP pathway; isopentenyl diphosphate from 1-deoxy-D-xylulose 5-phosphate: step 2/6. In terms of biological role, catalyzes the formation of 4-diphosphocytidyl-2-C-methyl-D-erythritol from CTP and 2-C-methyl-D-erythritol 4-phosphate (MEP). The polypeptide is 2-C-methyl-D-erythritol 4-phosphate cytidylyltransferase (Shewanella sediminis (strain HAW-EB3)).